Consider the following 367-residue polypeptide: RNA-binding protein 48 (367 aa).

Residues 46-124 (QYLLIQGVPA…GLLHVCYAPE (79 aa)) form the RRM domain. Disordered regions lie at residues 217-243 (PVDRAPDSSKDGRNHHKTMGHYNHNDS), 280-302 (QLQERKRRREDDRKLGTFLQTNP), and 343-367 (SVPKPPEDKPEDVHTSHPLKQRRRI). The span at 347 to 357 (PPEDKPEDVHT) shows a compositional bias: basic and acidic residues.

It belongs to the RBM48 family. In terms of assembly, component of the minor spliceosome. Within this complex, interacts with ARMC7 and PRPF8/PRP8.

Functionally, as a component of the minor spliceosome, involved in the splicing of U12-type introns in pre-mRNAs. This is RNA-binding protein 48 (RBM48) from Homo sapiens (Human).